Reading from the N-terminus, the 161-residue chain is ATP synthase subunit b 1 (161 aa).

A helical transmembrane segment spans residues 6 to 26; the sequence is ETWVAIAFVILMVVFGYLGVF.

The protein belongs to the ATPase B chain family. In terms of assembly, F-type ATPases have 2 components, F(1) - the catalytic core - and F(0) - the membrane proton channel. F(1) has five subunits: alpha(3), beta(3), gamma(1), delta(1), epsilon(1). F(0) has three main subunits: a(1), b(2) and c(10-14). The alpha and beta chains form an alternating ring which encloses part of the gamma chain. F(1) is attached to F(0) by a central stalk formed by the gamma and epsilon chains, while a peripheral stalk is formed by the delta and b chains.

It localises to the cell inner membrane. Its function is as follows. F(1)F(0) ATP synthase produces ATP from ADP in the presence of a proton or sodium gradient. F-type ATPases consist of two structural domains, F(1) containing the extramembraneous catalytic core and F(0) containing the membrane proton channel, linked together by a central stalk and a peripheral stalk. During catalysis, ATP synthesis in the catalytic domain of F(1) is coupled via a rotary mechanism of the central stalk subunits to proton translocation. Functionally, component of the F(0) channel, it forms part of the peripheral stalk, linking F(1) to F(0). The chain is ATP synthase subunit b 1 from Bradyrhizobium diazoefficiens (strain JCM 10833 / BCRC 13528 / IAM 13628 / NBRC 14792 / USDA 110).